Reading from the N-terminus, the 565-residue chain is Sulfite reductase [NADPH] hemoprotein beta-component (565 aa).

The [4Fe-4S] cluster site is built by Cys-429, Cys-435, Cys-474, and Cys-478. Cys-478 is a siroheme binding site.

Belongs to the nitrite and sulfite reductase 4Fe-4S domain family. As to quaternary structure, alpha(8)-beta(8). The alpha component is a flavoprotein, the beta component is a hemoprotein. Siroheme is required as a cofactor. It depends on [4Fe-4S] cluster as a cofactor.

The catalysed reaction is hydrogen sulfide + 3 NADP(+) + 3 H2O = sulfite + 3 NADPH + 4 H(+). Its pathway is sulfur metabolism; hydrogen sulfide biosynthesis; hydrogen sulfide from sulfite (NADPH route): step 1/1. Component of the sulfite reductase complex that catalyzes the 6-electron reduction of sulfite to sulfide. This is one of several activities required for the biosynthesis of L-cysteine from sulfate. This Shewanella sp. (strain MR-4) protein is Sulfite reductase [NADPH] hemoprotein beta-component.